The chain runs to 226 residues: MAKISKRFKEALSKVEKNKVYPLNKALDLAKQTATTKFDSTVEVAFNLNIDPRKADQQIRGAVVLPAGTGKTQRVLVLTNTKTKEAEQAKADIVGGEELINRIKNENWFDFDIIVATPEMMAKLGAIGKILGPKGLMPNPKTGTVTMDVAKAVDDIKKGKVEYRADKEGNIHLIIGKVSFEAEKLEENFKAVIDEIRRVKPQTVKGDYIKNITLSTTMGPGIKVEF.

This sequence belongs to the universal ribosomal protein uL1 family. In terms of assembly, part of the 50S ribosomal subunit.

Binds directly to 23S rRNA. The L1 stalk is quite mobile in the ribosome, and is involved in E site tRNA release. Its function is as follows. Protein L1 is also a translational repressor protein, it controls the translation of the L11 operon by binding to its mRNA. This Mycoplasma capricolum subsp. capricolum (strain California kid / ATCC 27343 / NCTC 10154) protein is Large ribosomal subunit protein uL1.